The sequence spans 51 residues: Insulin (51 aa).

3 cysteine pairs are disulfide-bonded: Cys-7/Cys-37, Cys-19/Cys-50, and Cys-36/Cys-41.

This sequence belongs to the insulin family. As to quaternary structure, heterodimer of a B chain and an A chain linked by two disulfide bonds.

It localises to the secreted. In terms of biological role, insulin decreases blood glucose concentration. It increases cell permeability to monosaccharides, amino acids and fatty acids. It accelerates glycolysis, the pentose phosphate cycle, and glycogen synthesis in liver. This is Insulin (INS) from Acomys cahirinus (Cairo spiny mouse).